The sequence spans 75 residues: Small ribosomal subunit protein bS18 (75 aa).

Belongs to the bacterial ribosomal protein bS18 family. In terms of assembly, part of the 30S ribosomal subunit. Forms a tight heterodimer with protein bS6.

Functionally, binds as a heterodimer with protein bS6 to the central domain of the 16S rRNA, where it helps stabilize the platform of the 30S subunit. This chain is Small ribosomal subunit protein bS18, found in Desulforudis audaxviator (strain MP104C).